We begin with the raw amino-acid sequence, 144 residues long: Granulocyte-macrophage colony-stimulating factor (144 aa).

The N-terminal stretch at 1-17 is a signal peptide; the sequence is MWLQSLLLLGTVACSIS. Residues serine 22, serine 24, and serine 26 are each glycosylated (O-linked (GalNAc...) serine). Threonine 27 carries an O-linked (GalNAc...) threonine; partial glycan. Residues asparagine 44 and asparagine 54 are each glycosylated (N-linked (GlcNAc...) asparagine). 2 disulfides stabilise this stretch: cysteine 71–cysteine 113 and cysteine 105–cysteine 138.

Belongs to the GM-CSF family. In terms of assembly, monomer. The signaling GM-CSF receptor complex is a dodecamer of two head-to-head hexamers of two alpha, two beta, and two ligand subunits.

The protein resides in the secreted. Functionally, cytokine that stimulates the growth and differentiation of hematopoietic precursor cells from various lineages, including granulocytes, macrophages, eosinophils and erythrocytes. This chain is Granulocyte-macrophage colony-stimulating factor (CSF2), found in Homo sapiens (Human).